Consider the following 247-residue polypeptide: Uridylate kinase (247 aa).

Residue 19–22 coordinates ATP; that stretch reads KISG. Glycine 61 contributes to the UMP binding site. ATP-binding residues include glycine 62 and arginine 66. UMP contacts are provided by residues aspartate 81 and 142–149; that span reads TGNPFFTT. Residues threonine 169, glutamine 170, tyrosine 175, and aspartate 178 each contribute to the ATP site.

It belongs to the UMP kinase family. In terms of assembly, homohexamer.

Its subcellular location is the cytoplasm. The enzyme catalyses UMP + ATP = UDP + ADP. Its pathway is pyrimidine metabolism; CTP biosynthesis via de novo pathway; UDP from UMP (UMPK route): step 1/1. With respect to regulation, inhibited by UTP. In terms of biological role, catalyzes the reversible phosphorylation of UMP to UDP. This chain is Uridylate kinase, found in Wolbachia pipientis wMel.